Reading from the N-terminus, the 492-residue chain is Phosphatidylinositol-glycan biosynthesis class W protein (492 aa).

A run of 5 helical transmembrane segments spans residues 26–46, 59–79, 82–102, 127–147, and 156–176; these read FILT…ATFF, FILE…FTEL, FLIV…QKNV, YRAF…FQVF, and TYGI…GALV. The interval 185-216 is disordered; it reads IEKQQKKKREEEEDDNDKINKTSSSSSSSSSA. Asparagine 204 carries an N-linked (GlcNAc...) asparagine glycan. Positions 205-216 are enriched in low complexity; it reads KTSSSSSSSSSA. A helical transmembrane segment spans residues 264 to 284; sequence YGLHWNFFFTLGFVSISLAFL. Residue asparagine 289 is glycosylated (N-linked (GlcNAc...) asparagine). The next 4 helical transmembrane spans lie at 290-310, 331-351, 364-384, and 399-419; these read ISAI…NSFG, ICSF…GTEL, FATK…LCEI, and VLAI…ITLI. N-linked (GlcNAc...) asparagine glycosylation is present at asparagine 424. The next 2 helical transmembrane spans lie at 437–457 and 464–484; these read LFIF…MKTI and SMII…ILDY.

Belongs to the PIGW family.

The protein resides in the endoplasmic reticulum membrane. It participates in glycolipid biosynthesis; glycosylphosphatidylinositol-anchor biosynthesis. Functionally, probable acetyltransferase, which acetylates the inositol ring of phosphatidylinositol during biosynthesis of GPI-anchor. The chain is Phosphatidylinositol-glycan biosynthesis class W protein from Dictyostelium discoideum (Social amoeba).